A 501-amino-acid chain; its full sequence is Glutamate--tRNA ligase (501 aa).

The short motif at Pro-11 to Gly-21 is the 'HIGH' region element. The 'KMSKS' region signature appears at Lys-260 to Arg-264. Lys-263 serves as a coordination point for ATP.

It belongs to the class-I aminoacyl-tRNA synthetase family. Glutamate--tRNA ligase type 1 subfamily. As to quaternary structure, monomer.

The protein resides in the cytoplasm. It carries out the reaction tRNA(Glu) + L-glutamate + ATP = L-glutamyl-tRNA(Glu) + AMP + diphosphate. Its function is as follows. Catalyzes the attachment of glutamate to tRNA(Glu) in a two-step reaction: glutamate is first activated by ATP to form Glu-AMP and then transferred to the acceptor end of tRNA(Glu). This is Glutamate--tRNA ligase from Flavobacterium johnsoniae (strain ATCC 17061 / DSM 2064 / JCM 8514 / BCRC 14874 / CCUG 350202 / NBRC 14942 / NCIMB 11054 / UW101) (Cytophaga johnsonae).